The chain runs to 521 residues: Ribonuclease Y (521 aa).

A helical membrane pass occupies residues 3–23 (VSIWMLVITVLAAVAAYFAGS). The region spanning 211–271 (TVSVVPLPSD…VRREVARMSL (61 aa)) is the KH domain. In terms of domain architecture, HD spans 337–430 (IYQHSLEVAF…VQAADALSGA (94 aa)).

The protein belongs to the RNase Y family.

The protein localises to the cell membrane. Its function is as follows. Endoribonuclease that initiates mRNA decay. The protein is Ribonuclease Y of Pelobacter propionicus (strain DSM 2379 / NBRC 103807 / OttBd1).